Reading from the N-terminus, the 331-residue chain is 6-phosphogluconolactonase (331 aa).

It belongs to the cycloisomerase 2 family.

The enzyme catalyses 6-phospho-D-glucono-1,5-lactone + H2O = 6-phospho-D-gluconate + H(+). Its pathway is carbohydrate degradation; pentose phosphate pathway; D-ribulose 5-phosphate from D-glucose 6-phosphate (oxidative stage): step 2/3. In terms of biological role, catalyzes the hydrolysis of 6-phosphogluconolactone to 6-phosphogluconate. This chain is 6-phosphogluconolactonase, found in Sodalis glossinidius (strain morsitans).